A 399-amino-acid chain; its full sequence is Cell division protein DivIB (399 aa).

2 disordered regions span residues 1-23 and 35-119; these read MSKD…SEWQ and EEEA…ATKE. At 1–133 the chain is on the cytoplasmic side; sequence MSKDKKNEDK…AKIPGIHILR (133 aa). Basic and acidic residues-rich tracts occupy residues 35–65 and 75–119; these read EEEA…KQDQ and ESAK…ATKE. Residues 134–154 traverse the membrane as a helical segment; that stretch reads AFTILFPSLLLLFVSAYLLSP. The Extracellular portion of the chain corresponds to 155-399; sequence YATMKDIRVE…NQTTQRSSRR (245 aa). Residues 156–226 form the POTRA domain; sequence ATMKDIRVEG…TKFTIKVKEY (71 aa). The segment covering 364-388 has biased composition (basic and acidic residues); sequence KAKQEAKEAEKKQEEEQKKQEEESN. The disordered stretch occupies residues 364-399; the sequence is KAKQEAKEAEKKQEEEQKKQEEESNRNQTTQRSSRR. Positions 389–399 are enriched in polar residues; sequence RNQTTQRSSRR.

The protein belongs to the FtsQ/DivIB family. DivIB subfamily.

The protein localises to the cell membrane. Its function is as follows. Cell division protein that may be involved in stabilizing or promoting the assembly of the division complex. The sequence is that of Cell division protein DivIB from Streptococcus pneumoniae serotype 4 (strain ATCC BAA-334 / TIGR4).